The following is a 375-amino-acid chain: 4,4'-diaponeurosporenoate glycosyltransferase (375 aa).

4 consecutive transmembrane segments (helical) span residues Leu-7–Tyr-23, Ala-112–Val-132, Ile-280–Leu-300, and Phe-333–Ile-353.

The protein belongs to the glycosyltransferase 2 family. CrtQ subfamily.

The protein resides in the cell membrane. It functions in the pathway carotenoid biosynthesis; staphyloxanthin biosynthesis; staphyloxanthin from farnesyl diphosphate: step 4/5. Its function is as follows. Catalyzes the glycosylation of 4,4'-diaponeurosporenoate, i.e. the esterification of glucose at the C1'' position with the carboxyl group of 4,4'-diaponeurosporenic acid, to form glycosyl-4,4'-diaponeurosporenoate. This is a step in the biosynthesis of staphyloxanthin, an orange pigment present in most staphylococci strains. The protein is 4,4'-diaponeurosporenoate glycosyltransferase (crtQ) of Staphylococcus haemolyticus (strain JCSC1435).